Consider the following 1198-residue polypeptide: Chromosome partition protein Smc (1198 aa).

40–47 provides a ligand contact to ATP; sequence PNGSGKSN. 2 coiled-coil regions span residues 175-211 and 322-524; these read ITKY…GQLG and LGEQ…LAKK. The SMC hinge domain occupies 534-647; that stretch reads CGTLADLLQV…VTDMEAATRV (114 aa). The stretch at 687 to 1042 forms a coiled coil; sequence SREIQELRQE…AELDKTMSER (356 aa). Positions 785-818 are disordered; sequence AEEQSKLTDSIQEAQEALARQEEKNRQASREMEQ. Basic and acidic residues predominate over residues 803 to 818; sequence ARQEEKNRQASREMEQ.

Belongs to the SMC family. As to quaternary structure, homodimer.

Its subcellular location is the cytoplasm. Required for chromosome condensation and partitioning. This chain is Chromosome partition protein Smc, found in Desulfitobacterium hafniense (strain Y51).